The following is a 242-amino-acid chain: Terpene cyclase dpfgB (242 aa).

The next 7 membrane-spanning stretches (helical) occupy residues 15–37 (DVAW…NYVG), 51–71 (ALMA…IYPF), 75–95 (LEMY…YTAV), 112–132 (LPLI…ALAA), 141–161 (AWSA…QLLC), 169–189 (SYFL…QDIL), and 205–225 (LYIW…ICLW).

It belongs to the paxB family.

Its subcellular location is the membrane. The protein operates within secondary metabolite biosynthesis; terpenoid biosynthesis. In terms of biological role, terpene cyclase; part of the gene cluster that mediates the biosynthesis of diterpenoid pyrones. The first step of the pathway is the synthesis of the alpha-pyrone moiety by the polyketide synthase dpfgA via condensation of one acetyl-CoA starter unit with 3 malonyl-CoA units and 2 methylations. The alpha-pyrone is then combined with geranylgeranyl pyrophosphate (GGPP) formed by the GGPP synthase dpfgD through the action of the prenyltransferase dpfgC to yield a linear alpha-pyrone diterpenoid. Subsequent steps in the diterpenoid pyrone biosynthetic pathway involve the decalin core formation, which is initiated by the epoxidation of the C10-C11 olefin by the FAD-dependent oxidoreductase dpfgE, and is followed by a cyclization cascade catalyzed by the terpene cyclase dpfgB. The short chain dehydrogenase/reductase dpfgG then oxidizes the 8S hydroxy group to a ketone and the short chain dehydrogenase/reductase dpfgH reduces the ketone to the 8R hydroxy group to yield higginsianin B. Higginsianin B is further methylated by the methyltransferase dpfgI to produce the intermediate named FDDP B. The cytochrome P450 monooxygenase dfgpJ then catalyzes a three-step oxidation at C-27 to generate a carboxylic acid as well as C-26 hydroxylation. Finally, methyltransferase dpfgK methylates the carboxylic acid generated by dpfgJ, yielding the final diterpenoid pyrones from the pathway which were named FDDP D and FDDP E. This chain is Terpene cyclase dpfgB, found in Gibberella zeae (strain ATCC MYA-4620 / CBS 123657 / FGSC 9075 / NRRL 31084 / PH-1) (Wheat head blight fungus).